The chain runs to 142 residues: Hemoglobin subunit alpha-1 (142 aa).

Residues 2–142 (VLSADDKSNV…VSTVLTSKYR (141 aa)) enclose the Globin domain. Residue histidine 59 participates in O2 binding. Histidine 88 is a binding site for heme b.

The protein belongs to the globin family. As to quaternary structure, heterotetramer of two alpha chains and two beta chains. As to expression, red blood cells.

Its function is as follows. Involved in oxygen transport from the lung to the various peripheral tissues. In terms of biological role, hemopressin acts as an antagonist peptide of the cannabinoid receptor CNR1. Hemopressin-binding efficiently blocks cannabinoid receptor CNR1 and subsequent signaling. This chain is Hemoglobin subunit alpha-1 (HBA1), found in Equus quagga burchellii (Burchell's zebra).